A 275-amino-acid chain; its full sequence is Structure-specific endonuclease subunit SLX1 (275 aa).

Residues 12–95 (RFFGVYLLYC…QHPHASRRLA (84 aa)) enclose the GIY-YIG domain. Residues 148 to 161 (HVPLAFGPPPPQAP) are compositionally biased toward pro residues. A disordered region spans residues 148–179 (HVPLAFGPPPPQAPAPRRRAGPFDDAEPEPDQ). The SLX1-type zinc-finger motif lies at 186–238 (CSLCAQTIQDEEGPLCCPHPGCLLRAHVICLAEEFLQEEPGQLLPLEGQCPCC).

This sequence belongs to the SLX1 family. Forms a heterodimer with SLX4. Requires a divalent metal cation as cofactor.

It is found in the nucleus. Its function is as follows. Catalytic subunit of the SLX1-SLX4 structure-specific endonuclease that resolves DNA secondary structures generated during DNA repair and recombination. Has endonuclease activity towards branched DNA substrates, introducing single-strand cuts in duplex DNA close to junctions with ss-DNA. Has a preference for 5'-flap structures, and promotes symmetrical cleavage of static and migrating Holliday junctions (HJs). Resolves HJs by generating two pairs of ligatable, nicked duplex products. This chain is Structure-specific endonuclease subunit SLX1, found in Homo sapiens (Human).